Reading from the N-terminus, the 78-residue chain is Large ribosomal subunit protein bL31 (78 aa).

The protein belongs to the bacterial ribosomal protein bL31 family. Type A subfamily. In terms of assembly, part of the 50S ribosomal subunit.

Binds the 23S rRNA. The sequence is that of Large ribosomal subunit protein bL31 (rpmE) from Rickettsia conorii (strain ATCC VR-613 / Malish 7).